Here is a 184-residue protein sequence, read N- to C-terminus: 2-C-methyl-D-erythritol 2,4-cyclodiphosphate synthase (184 aa).

Asp17 and His19 together coordinate a divalent metal cation. Residues 17–19 (DVH) and 47–48 (HS) contribute to the 4-CDP-2-C-methyl-D-erythritol 2-phosphate site. His55 contacts a divalent metal cation. Residues 74–78 (FPNTD), Phe152, and Arg155 contribute to the 4-CDP-2-C-methyl-D-erythritol 2-phosphate site.

This sequence belongs to the IspF family. Homotrimer. A divalent metal cation is required as a cofactor.

It catalyses the reaction 4-CDP-2-C-methyl-D-erythritol 2-phosphate = 2-C-methyl-D-erythritol 2,4-cyclic diphosphate + CMP. The protein operates within isoprenoid biosynthesis; isopentenyl diphosphate biosynthesis via DXP pathway; isopentenyl diphosphate from 1-deoxy-D-xylulose 5-phosphate: step 4/6. Functionally, involved in the biosynthesis of isopentenyl diphosphate (IPP) and dimethylallyl diphosphate (DMAPP), two major building blocks of isoprenoid compounds. Catalyzes the conversion of 4-diphosphocytidyl-2-C-methyl-D-erythritol 2-phosphate (CDP-ME2P) to 2-C-methyl-D-erythritol 2,4-cyclodiphosphate (ME-CPP) with a corresponding release of cytidine 5-monophosphate (CMP). This is 2-C-methyl-D-erythritol 2,4-cyclodiphosphate synthase from Anaplasma marginale (strain St. Maries).